We begin with the raw amino-acid sequence, 846 residues long: ATR-interacting protein mus304 (846 aa).

3 disordered regions span residues 20 to 40 (DVSV…FDGI), 90 to 109 (QGST…QKKP), and 135 to 162 (EPQK…KTTT). Positions 144–162 (TSTSRITTSSISVQQKTTT) are enriched in low complexity. 2 coiled-coil regions span residues 168 to 240 (ATQS…LADE) and 327 to 359 (EYSE…LQAK). The EEXXXDL motif signature appears at 504 to 510 (EELLFDL). The disordered stretch occupies residues 651-681 (GAVQGSVSNGSTSASVSNPNQNSNSSTTQRG). The span at 655 to 676 (GSVSNGSTSASVSNPNQNSNSS) shows a compositional bias: low complexity.

The protein belongs to the ATRIP family. As to quaternary structure, interacts with ATR/mei-41. Highly expressed in the oocyte and nurse cells from stage 5 onward and in embryos prior to during nuclear division 14. Then, it decreases to background levels during interphase 14. Weakly or not expressed in stage embryos and imaginal disks.

It is found in the cytoplasm. Functionally, DNA damage checkpoint protein required for chromosome break repair and for genomic stability during development. The chain is ATR-interacting protein mus304 (mus304) from Drosophila melanogaster (Fruit fly).